A 67-amino-acid chain; its full sequence is Large ribosomal subunit protein eL38 (67 aa).

This sequence belongs to the eukaryotic ribosomal protein eL38 family.

The protein is Large ribosomal subunit protein eL38 (rpl38e) of Aeropyrum pernix (strain ATCC 700893 / DSM 11879 / JCM 9820 / NBRC 100138 / K1).